The sequence spans 311 residues: Ribonuclease HIII (311 aa).

In terms of domain architecture, RNase H type-2 spans 95 to 311 (MSIVGSDEVG…NTEKALRLLR (217 aa)). 3 residues coordinate a divalent metal cation: Asp101, Glu102, and Asp206.

It belongs to the RNase HII family. RnhC subfamily. It depends on Mn(2+) as a cofactor. Mg(2+) is required as a cofactor.

It localises to the cytoplasm. It catalyses the reaction Endonucleolytic cleavage to 5'-phosphomonoester.. In terms of biological role, endonuclease that specifically degrades the RNA of RNA-DNA hybrids. This Bacillus cereus (strain ATCC 14579 / DSM 31 / CCUG 7414 / JCM 2152 / NBRC 15305 / NCIMB 9373 / NCTC 2599 / NRRL B-3711) protein is Ribonuclease HIII.